Reading from the N-terminus, the 429-residue chain is Adenylosuccinate synthetase (429 aa).

GTP contacts are provided by residues 13–19 and 41–43; these read GDEGKGK and GHT. The Proton acceptor role is filled by Asp14. Mg(2+) is bound by residues Asp14 and Gly41. IMP is bound by residues 14–17, 39–42, Thr130, Arg144, Gln225, Thr240, and Arg304; these read DEGK and NAGH. His42 acts as the Proton donor in catalysis. 300–306 lines the substrate pocket; that stretch reads ATTGRRR. GTP-binding positions include Arg306, 332–334, and 417–419; these read KLD and STG.

Belongs to the adenylosuccinate synthetase family. As to quaternary structure, homodimer. The cofactor is Mg(2+).

Its subcellular location is the cytoplasm. The catalysed reaction is IMP + L-aspartate + GTP = N(6)-(1,2-dicarboxyethyl)-AMP + GDP + phosphate + 2 H(+). It functions in the pathway purine metabolism; AMP biosynthesis via de novo pathway; AMP from IMP: step 1/2. Plays an important role in the de novo pathway of purine nucleotide biosynthesis. Catalyzes the first committed step in the biosynthesis of AMP from IMP. The chain is Adenylosuccinate synthetase from Buchnera aphidicola subsp. Baizongia pistaciae (strain Bp).